The chain runs to 314 residues: Phosphoribosylaminoimidazole-succinocarboxamide synthase (314 aa).

Belongs to the SAICAR synthetase family.

It catalyses the reaction 5-amino-1-(5-phospho-D-ribosyl)imidazole-4-carboxylate + L-aspartate + ATP = (2S)-2-[5-amino-1-(5-phospho-beta-D-ribosyl)imidazole-4-carboxamido]succinate + ADP + phosphate + 2 H(+). It participates in purine metabolism; IMP biosynthesis via de novo pathway; 5-amino-1-(5-phospho-D-ribosyl)imidazole-4-carboxamide from 5-amino-1-(5-phospho-D-ribosyl)imidazole-4-carboxylate: step 1/2. This is Phosphoribosylaminoimidazole-succinocarboxamide synthase from Bacteroides thetaiotaomicron (strain ATCC 29148 / DSM 2079 / JCM 5827 / CCUG 10774 / NCTC 10582 / VPI-5482 / E50).